The chain runs to 73 residues: Small ribosomal subunit protein bS18 (73 aa).

The protein belongs to the bacterial ribosomal protein bS18 family. In terms of assembly, part of the 30S ribosomal subunit. Forms a tight heterodimer with protein bS6.

Its function is as follows. Binds as a heterodimer with protein bS6 to the central domain of the 16S rRNA, where it helps stabilize the platform of the 30S subunit. The polypeptide is Small ribosomal subunit protein bS18 (Synechococcus sp. (strain RCC307)).